The chain runs to 279 residues: Elongation factor Ts (279 aa).

The involved in Mg(2+) ion dislocation from EF-Tu stretch occupies residues Thr-79 to Val-82.

It belongs to the EF-Ts family.

It is found in the cytoplasm. In terms of biological role, associates with the EF-Tu.GDP complex and induces the exchange of GDP to GTP. It remains bound to the aminoacyl-tRNA.EF-Tu.GTP complex up to the GTP hydrolysis stage on the ribosome. The chain is Elongation factor Ts from Phytoplasma mali (strain AT).